We begin with the raw amino-acid sequence, 184 residues long: Transcription termination/antitermination protein NusG (184 aa).

Belongs to the NusG family.

In terms of biological role, participates in transcription elongation, termination and antitermination. The chain is Transcription termination/antitermination protein NusG from Borreliella burgdorferi (strain ATCC 35210 / DSM 4680 / CIP 102532 / B31) (Borrelia burgdorferi).